A 367-amino-acid polypeptide reads, in one-letter code: DNA replication and repair protein RecF (367 aa).

Position 30–37 (30–37 (GNNGEGKT)) interacts with ATP.

The protein belongs to the RecF family.

It localises to the cytoplasm. The RecF protein is involved in DNA metabolism; it is required for DNA replication and normal SOS inducibility. RecF binds preferentially to single-stranded, linear DNA. It also seems to bind ATP. The protein is DNA replication and repair protein RecF of Leptospira biflexa serovar Patoc (strain Patoc 1 / Ames).